A 361-amino-acid polypeptide reads, in one-letter code: Nuclear pore complex protein NUP43 (361 aa).

Positions 51–73 (IQSLDPNPRGNHNTNPLIESLSS) are disordered. WD repeat units follow at residues 132–173 (FHVG…YRKV), 177–215 (NGLVAYRAVKWASPTEFVTGGYGFGLQLWDQRKSGEAVS), and 225–265 (KTSA…QPIV).

As to quaternary structure, part of the nuclear pore complex (NPC). The NPC has an eight-fold symmetrical structure comprising a central transport channel and two rings, the cytoplasmic and nuclear rings, to which eight filaments are attached. The cytoplasmic filaments have loose ends, while the nuclear filaments are joined in a distal ring, forming a nuclear basket. NPCs are highly dynamic in configuration and composition, and can be devided in 3 subcomplexes, the NUP62 subcomplex, the NUP107-160 subcomplex and the NUP93 subcomplex, containing approximately 30 different nucleoporin proteins.

The protein resides in the nucleus envelope. The protein localises to the nucleus. It is found in the nuclear pore complex. The sequence is that of Nuclear pore complex protein NUP43 from Arabidopsis thaliana (Mouse-ear cress).